The chain runs to 880 residues: Pentatricopeptide repeat-containing protein At3g07290, mitochondrial (880 aa).

A mitochondrion-targeting transit peptide spans 1-89 (MLLIHIRSTR…RSDNDICVRF (89 aa)). PPR repeat units follow at residues 159 to 193 (NYPCYSSLLMSLAKLDLGFLAYVTYRRMEADGFVV), 194 to 228 (GMIDYRTIVNALCKNGYTEAAEMFMSKILKIGFVL), 229 to 259 (DSHIGTSLLLGFCRGLNLRDALKVFDVMSKE), 265 to 299 (NSVSYSILIHGLCEVGRLEEAFGLKDQMGEKGCQP), 300 to 334 (STRTYTVLIKALCDRGLIDKAFNLFDEMIPRGCKP), 335 to 369 (NVHTYTVLIDGLCRDGKIEEANGVCRKMVKDRIFP), 370 to 404 (SVITYNALINGYCKDGRVVPAFELLTVMEKRACKP), 405 to 439 (NVRTFNELMEGLCRVGKPYKAVHLLKRMLDNGLSP), 440 to 474 (DIVSYNVLIDGLCREGHMNTAYKLLSSMNCFDIEP), 475 to 509 (DCLTFTAIINAFCKQGKADVASAFLGLMLRKGISL), 510 to 544 (DEVTGTTLIDGVCKVGKTRDALFILETLVKMRILT), 545 to 579 (TPHSLNVILDMLSKGCKVKEELAMLGKINKLGLVP), 580 to 614 (SVVTYTTLVDGLIRSGDITGSFRILELMKLSGCLP), 615 to 649 (NVYPYTIIINGLCQFGRVEEAEKLLSAMQDSGVSP), 650 to 684 (NHVTYTVMVKGYVNNGKLDRALETVRAMVERGYEL), 685 to 721 (NDRIYSSLLQGFVLSQKGIDNSEESTVSDIALRETDP), 738 to 768 (ISGLCIFLVTRLCKEGRTDESNDLVQNVLER), 772 to 806 (LEKAMDIIMESYCSKKKHTKCMELITLVLKSGFVP), and 807 to 842 (SFKSFCLVIQGLKKEGDAERARELVMELLTSNGVVE).

The protein belongs to the PPR family. P subfamily.

It is found in the mitochondrion. This chain is Pentatricopeptide repeat-containing protein At3g07290, mitochondrial, found in Arabidopsis thaliana (Mouse-ear cress).